Here is a 503-residue protein sequence, read N- to C-terminus: MAETQPLVFVLMSISAILTAGLPINDDASLLISVNPETQQLVDSLGRERFFHGTNVVVKHKPYHPSVEGYDNTSFSEVDMKILQDLGLNTIRLGMMLPGYVPTRGNYNETYLKIIQEIVSKAAKYGIYTLLDMHQDVMSAKFCVEGFPDWAVNTGNADNFPFPLEDKYPLNLQTGYPYPKDCAKHAWGDYYFTEAAAAAFQNFYNNTDGLLDAWADFWKKTAQGFKDYKSVIGYELINEPFAGDIYRDPSLMIPGVADERNLAPAYDVIHKAIRTVDEQHSIFFEGVTWDYFAAGFSKVPGGDAYRNRSVLSYHYYEPPDFNKKFQFEVRMEDLRRLKCGGFLTELLTVGDTAKDMSDMLELFDICDQHKQSWMGWLYKSYGCYKQHLGCLTDSMHDETGHLRDIVLQNTTRTYPQAVAGHTIGYKFDRITKKFDLSFVVTADCRSTESIVYFNKDLHYSNGYDVTVFPKDSVTWKQVEKKIIINHSQKLSAGTTVTFSLVAK.

Positions 1-21 are cleaved as a signal peptide; it reads MAETQPLVFVLMSISAILTAG. Asparagine 72, asparagine 108, and asparagine 205 each carry an N-linked (GlcNAc...) asparagine glycan. The active-site Proton donor is the glutamate 239. 3 N-linked (GlcNAc...) asparagine glycosylation sites follow: asparagine 307, asparagine 409, and asparagine 485.

This sequence belongs to the glycosyl hydrolase 5 (cellulase A) family.

It is found in the secreted. It localises to the nematocyst. It catalyses the reaction an oligoglycosyl-(1-&gt;4)-beta-D-glucosyl-(1&lt;-&gt;1)-ceramide + H2O = an oligoglycosyl-(1-&gt;4)-D-glucose + an N-acyl-sphingoid base. With respect to regulation, completely inhibited by Hg(2+). Cu(2+) and zinc have no effect on enzyme activity. Lithium, potassium, manganese, Ni(2+), calcium, magnesium and EDTA have no significant effect on enzyme activity. Enzyme requires presence of detergents such as Triton X-100 and Lubrol PX for the hydrolysis of glycosphingolipids. Taurodeoxycholate strongly inhibits the enzyme activity and SDS completely inhibits the enzyme activity. Its function is as follows. Hydrolysis of the glycosidic linkage between oligosaccharides and ceramides of glycosphingolipids, especially b-series polysialogangliosides. In Cyanea nozakii (Jellyfish), this protein is Endoglycoceramidase.